The primary structure comprises 651 residues: DNA topoisomerase 3 (651 aa).

The Toprim domain occupies 1–134 (MRLFIAEKPS…KRDKILRCLI (134 aa)). Mg(2+) is bound by residues E7, D103, and D105. The Topo IA-type catalytic domain maps to 155 to 612 (FIPLATSALA…NLNQILPDLV (458 aa)). Positions 194–199 (SVGRVQ) are interaction with DNA. The active-site O-(5'-phospho-DNA)-tyrosine intermediate is Y337. Residues 631–651 (SDRAKPKSAVKKSSKSNGETD) are disordered.

Belongs to the type IA topoisomerase family. Mg(2+) is required as a cofactor.

The enzyme catalyses ATP-independent breakage of single-stranded DNA, followed by passage and rejoining.. Releases the supercoiling and torsional tension of DNA, which is introduced during the DNA replication and transcription, by transiently cleaving and rejoining one strand of the DNA duplex. Introduces a single-strand break via transesterification at a target site in duplex DNA. The scissile phosphodiester is attacked by the catalytic tyrosine of the enzyme, resulting in the formation of a DNA-(5'-phosphotyrosyl)-enzyme intermediate and the expulsion of a 3'-OH DNA strand. The free DNA strand then undergoes passage around the unbroken strand, thus removing DNA supercoils. Finally, in the religation step, the DNA 3'-OH attacks the covalent intermediate to expel the active-site tyrosine and restore the DNA phosphodiester backbone. This chain is DNA topoisomerase 3, found in Haemophilus influenzae (strain ATCC 51907 / DSM 11121 / KW20 / Rd).